Reading from the N-terminus, the 563-residue chain is Arginine--tRNA ligase (563 aa).

The short motif at 123–133 is the 'HIGH' region element; it reads PNIAKDMHVGH.

This sequence belongs to the class-I aminoacyl-tRNA synthetase family. In terms of assembly, monomer.

It is found in the cytoplasm. It carries out the reaction tRNA(Arg) + L-arginine + ATP = L-arginyl-tRNA(Arg) + AMP + diphosphate. In Chlamydia trachomatis serovar A (strain ATCC VR-571B / DSM 19440 / HAR-13), this protein is Arginine--tRNA ligase.